Reading from the N-terminus, the 144-residue chain is 3-dehydroquinate dehydratase (144 aa).

Tyr24 functions as the Proton acceptor in the catalytic mechanism. Substrate contacts are provided by Asn73, His79, and Asp86. Catalysis depends on His99, which acts as the Proton donor. Substrate is bound by residues 100–101 and Arg110; that span reads LS.

Belongs to the type-II 3-dehydroquinase family. In terms of assembly, homododecamer.

The catalysed reaction is 3-dehydroquinate = 3-dehydroshikimate + H2O. Its pathway is metabolic intermediate biosynthesis; chorismate biosynthesis; chorismate from D-erythrose 4-phosphate and phosphoenolpyruvate: step 3/7. Functionally, catalyzes a trans-dehydration via an enolate intermediate. The sequence is that of 3-dehydroquinate dehydratase from Shewanella sp. (strain ANA-3).